The chain runs to 1082 residues: Probable arabinosyltransferase B (1082 aa).

13 consecutive transmembrane segments (helical) span residues 28–50, 223–241, 262–281, 333–352, 359–381, 420–442, 462–481, 522–544, 557–574, 578–600, 613–635, 650–672, and 689–711; these read WVAT…LPVT, LAAM…LALW, VTAV…VIGA, SIWI…LLLS, LGPA…LGAW, AITT…AALL, WPLI…VVFA, AISR…FMML, AWRL…LMFT, WTHH…TVLV, AFLS…WWYV, GGVQ…AFWL, and APIP…IGVV.

Belongs to the emb family.

The protein localises to the cell membrane. Arabinosyl transferase responsible for the polymerization of arabinose into the arabinan of arabinogalactan. The sequence is that of Probable arabinosyltransferase B (embB) from Mycolicibacterium smegmatis (Mycobacterium smegmatis).